Consider the following 456-residue polypeptide: Adenylosuccinate lyase (456 aa).

Residues 15-16 (RY), 90-92 (NHD), and 122-123 (TS) each bind N(6)-(1,2-dicarboxyethyl)-AMP. His171 (proton donor/acceptor) is an active-site residue. Gln247 provides a ligand contact to N(6)-(1,2-dicarboxyethyl)-AMP. The active-site Proton donor/acceptor is the Ser295. Residues Ser296, 301–303 (KVN), Asn309, Arg335, and 340–344 (STVLR) contribute to the N(6)-(1,2-dicarboxyethyl)-AMP site.

The protein belongs to the lyase 1 family. Adenylosuccinate lyase subfamily. As to quaternary structure, homotetramer. Residues from neighboring subunits contribute catalytic and substrate-binding residues to each active site.

It catalyses the reaction N(6)-(1,2-dicarboxyethyl)-AMP = fumarate + AMP. The enzyme catalyses (2S)-2-[5-amino-1-(5-phospho-beta-D-ribosyl)imidazole-4-carboxamido]succinate = 5-amino-1-(5-phospho-beta-D-ribosyl)imidazole-4-carboxamide + fumarate. It participates in purine metabolism; AMP biosynthesis via de novo pathway; AMP from IMP: step 2/2. Its pathway is purine metabolism; IMP biosynthesis via de novo pathway; 5-amino-1-(5-phospho-D-ribosyl)imidazole-4-carboxamide from 5-amino-1-(5-phospho-D-ribosyl)imidazole-4-carboxylate: step 2/2. Functionally, catalyzes two reactions in de novo purine nucleotide biosynthesis. Catalyzes the breakdown of 5-aminoimidazole- (N-succinylocarboxamide) ribotide (SAICAR or 2-[5-amino-1-(5-phospho-beta-D-ribosyl)imidazole-4-carboxamido]succinate) to 5-aminoimidazole-4-carboxamide ribotide (AICAR or 5-amino-1-(5-phospho-beta-D-ribosyl)imidazole-4-carboxamide) and fumarate, and of adenylosuccinate (ADS or N(6)-(1,2-dicarboxyethyl)-AMP) to adenosine monophosphate (AMP) and fumarate. This Haemophilus influenzae (strain ATCC 51907 / DSM 11121 / KW20 / Rd) protein is Adenylosuccinate lyase (purB).